Reading from the N-terminus, the 234-residue chain is Leucyl/phenylalanyl-tRNA--protein transferase (234 aa).

This sequence belongs to the L/F-transferase family.

The protein resides in the cytoplasm. The enzyme catalyses N-terminal L-lysyl-[protein] + L-leucyl-tRNA(Leu) = N-terminal L-leucyl-L-lysyl-[protein] + tRNA(Leu) + H(+). It carries out the reaction N-terminal L-arginyl-[protein] + L-leucyl-tRNA(Leu) = N-terminal L-leucyl-L-arginyl-[protein] + tRNA(Leu) + H(+). It catalyses the reaction L-phenylalanyl-tRNA(Phe) + an N-terminal L-alpha-aminoacyl-[protein] = an N-terminal L-phenylalanyl-L-alpha-aminoacyl-[protein] + tRNA(Phe). Functions in the N-end rule pathway of protein degradation where it conjugates Leu, Phe and, less efficiently, Met from aminoacyl-tRNAs to the N-termini of proteins containing an N-terminal arginine or lysine. This chain is Leucyl/phenylalanyl-tRNA--protein transferase, found in Hahella chejuensis (strain KCTC 2396).